We begin with the raw amino-acid sequence, 227 residues long: Fibrillarin-like rRNA/tRNA 2'-O-methyltransferase (227 aa).

S-adenosyl-L-methionine contacts are provided by residues 82–83 (TT), 100–101 (EF), 125–126 (DA), and 145–148 (DVAQ).

It belongs to the methyltransferase superfamily. Fibrillarin family. As to quaternary structure, interacts with nop5. Component of box C/D small ribonucleoprotein (sRNP) particles that contain rpl7ae, FlpA and nop5, plus a guide RNA.

In terms of biological role, involved in pre-rRNA and tRNA processing. Utilizes the methyl donor S-adenosyl-L-methionine to catalyze the site-specific 2'-hydroxyl methylation of ribose moieties in rRNA and tRNA. Site specificity is provided by a guide RNA that base pairs with the substrate. Methylation occurs at a characteristic distance from the sequence involved in base pairing with the guide RNA. This Methanosarcina acetivorans (strain ATCC 35395 / DSM 2834 / JCM 12185 / C2A) protein is Fibrillarin-like rRNA/tRNA 2'-O-methyltransferase.